The chain runs to 284 residues: Nucleotide-binding protein NMCC_0698 (284 aa).

An ATP-binding site is contributed by 8 to 15 (GLSGSGKS). 58 to 61 (DVRS) provides a ligand contact to GTP.

This sequence belongs to the RapZ-like family.

Displays ATPase and GTPase activities. The chain is Nucleotide-binding protein NMCC_0698 from Neisseria meningitidis serogroup C (strain 053442).